The sequence spans 121 residues: Large ribosomal subunit protein uL18 (121 aa).

Belongs to the universal ribosomal protein uL18 family. Part of the 50S ribosomal subunit; part of the 5S rRNA/L5/L18/L25 subcomplex. Contacts the 5S and 23S rRNAs.

This is one of the proteins that bind and probably mediate the attachment of the 5S RNA into the large ribosomal subunit, where it forms part of the central protuberance. The chain is Large ribosomal subunit protein uL18 from Paracidovorax citrulli (strain AAC00-1) (Acidovorax citrulli).